We begin with the raw amino-acid sequence, 532 residues long: Phosphoenolpyruvate carboxykinase (ATP) (532 aa).

Residues Arg-60, Tyr-194, and Lys-200 each contribute to the substrate site. Residues Lys-200, His-219, and 237–245 (GLSGTGKTT) contribute to the ATP site. The Mn(2+) site is built by Lys-200 and His-219. Position 258 (Asp-258) interacts with Mn(2+). ATP contacts are provided by Glu-286, Arg-324, and Thr-449. Arg-324 contributes to the substrate binding site.

This sequence belongs to the phosphoenolpyruvate carboxykinase (ATP) family. It depends on Mn(2+) as a cofactor.

It localises to the cytoplasm. It catalyses the reaction oxaloacetate + ATP = phosphoenolpyruvate + ADP + CO2. It participates in carbohydrate biosynthesis; gluconeogenesis. Its function is as follows. Involved in the gluconeogenesis. Catalyzes the conversion of oxaloacetate (OAA) to phosphoenolpyruvate (PEP) through direct phosphoryl transfer between the nucleoside triphosphate and OAA. This is Phosphoenolpyruvate carboxykinase (ATP) from Cereibacter sphaeroides (strain ATCC 17025 / ATH 2.4.3) (Rhodobacter sphaeroides).